A 269-amino-acid polypeptide reads, in one-letter code: Formamidopyrimidine-DNA glycosylase (269 aa).

P2 serves as the catalytic Schiff-base intermediate with DNA. The active-site Proton donor is E3. K57 acts as the Proton donor; for beta-elimination activity in catalysis. Residues H90, R109, and R150 each contribute to the DNA site. An FPG-type zinc finger spans residues 235–269 (NVYGRAGQPCVQCDAILKADRHGQRSTAYCPQCQR). The active-site Proton donor; for delta-elimination activity is R259.

Belongs to the FPG family. Monomer. Zn(2+) is required as a cofactor.

It catalyses the reaction Hydrolysis of DNA containing ring-opened 7-methylguanine residues, releasing 2,6-diamino-4-hydroxy-5-(N-methyl)formamidopyrimidine.. The enzyme catalyses 2'-deoxyribonucleotide-(2'-deoxyribose 5'-phosphate)-2'-deoxyribonucleotide-DNA = a 3'-end 2'-deoxyribonucleotide-(2,3-dehydro-2,3-deoxyribose 5'-phosphate)-DNA + a 5'-end 5'-phospho-2'-deoxyribonucleoside-DNA + H(+). In terms of biological role, involved in base excision repair of DNA damaged by oxidation or by mutagenic agents. Acts as a DNA glycosylase that recognizes and removes damaged bases. Has a preference for oxidized purines, such as 7,8-dihydro-8-oxoguanine (8-oxoG). Has AP (apurinic/apyrimidinic) lyase activity and introduces nicks in the DNA strand. Cleaves the DNA backbone by beta-delta elimination to generate a single-strand break at the site of the removed base with both 3'- and 5'-phosphates. This is Formamidopyrimidine-DNA glycosylase from Alcanivorax borkumensis (strain ATCC 700651 / DSM 11573 / NCIMB 13689 / SK2).